A 447-amino-acid chain; its full sequence is ATP-dependent protease ATPase subunit HslU (447 aa).

Residues Ile17, Gly59 to Glu64, Asp256, Glu321, and Arg393 contribute to the ATP site.

This sequence belongs to the ClpX chaperone family. HslU subfamily. A double ring-shaped homohexamer of HslV is capped on each side by a ring-shaped HslU homohexamer. The assembly of the HslU/HslV complex is dependent on binding of ATP.

It is found in the cytoplasm. ATPase subunit of a proteasome-like degradation complex; this subunit has chaperone activity. The binding of ATP and its subsequent hydrolysis by HslU are essential for unfolding of protein substrates subsequently hydrolyzed by HslV. HslU recognizes the N-terminal part of its protein substrates and unfolds these before they are guided to HslV for hydrolysis. This Pseudomonas putida (strain ATCC 47054 / DSM 6125 / CFBP 8728 / NCIMB 11950 / KT2440) protein is ATP-dependent protease ATPase subunit HslU.